We begin with the raw amino-acid sequence, 317 residues long: Transaldolase (317 aa).

Lysine 132 functions as the Schiff-base intermediate with substrate in the catalytic mechanism.

This sequence belongs to the transaldolase family. Type 1 subfamily. Homodimer.

The protein resides in the cytoplasm. It catalyses the reaction D-sedoheptulose 7-phosphate + D-glyceraldehyde 3-phosphate = D-erythrose 4-phosphate + beta-D-fructose 6-phosphate. It functions in the pathway carbohydrate degradation; pentose phosphate pathway; D-glyceraldehyde 3-phosphate and beta-D-fructose 6-phosphate from D-ribose 5-phosphate and D-xylulose 5-phosphate (non-oxidative stage): step 2/3. Transaldolase is important for the balance of metabolites in the pentose-phosphate pathway. The protein is Transaldolase of Yersinia pseudotuberculosis serotype O:1b (strain IP 31758).